A 236-amino-acid chain; its full sequence is Purine nucleoside phosphorylase DeoD-type (236 aa).

His4 lines the a purine D-ribonucleoside pocket. Phosphate-binding positions include Gly20, Arg24, Arg43, and 87-90 (RVGT). A purine D-ribonucleoside-binding positions include 179–181 (EME) and 203–204 (SD). Asp204 serves as the catalytic Proton donor.

It belongs to the PNP/UDP phosphorylase family. Homohexamer; trimer of homodimers.

It carries out the reaction a purine D-ribonucleoside + phosphate = a purine nucleobase + alpha-D-ribose 1-phosphate. The enzyme catalyses a purine 2'-deoxy-D-ribonucleoside + phosphate = a purine nucleobase + 2-deoxy-alpha-D-ribose 1-phosphate. Catalyzes the reversible phosphorolytic breakdown of the N-glycosidic bond in the beta-(deoxy)ribonucleoside molecules, with the formation of the corresponding free purine bases and pentose-1-phosphate. The sequence is that of Purine nucleoside phosphorylase DeoD-type from Streptococcus thermophilus (strain ATCC BAA-491 / LMD-9).